The primary structure comprises 228 residues: 5'-methylthioadenosine/S-adenosylhomocysteine nucleosidase (228 aa).

Glu-11 (proton acceptor) is an active-site residue. Substrate-binding positions include Gly-77, Ile-151, and Met-172–Glu-173. Residue Asp-196 is the Proton donor of the active site.

Belongs to the PNP/UDP phosphorylase family. MtnN subfamily.

The catalysed reaction is S-adenosyl-L-homocysteine + H2O = S-(5-deoxy-D-ribos-5-yl)-L-homocysteine + adenine. It carries out the reaction S-methyl-5'-thioadenosine + H2O = 5-(methylsulfanyl)-D-ribose + adenine. The enzyme catalyses 5'-deoxyadenosine + H2O = 5-deoxy-D-ribose + adenine. It functions in the pathway amino-acid biosynthesis; L-methionine biosynthesis via salvage pathway; S-methyl-5-thio-alpha-D-ribose 1-phosphate from S-methyl-5'-thioadenosine (hydrolase route): step 1/2. Its function is as follows. Catalyzes the irreversible cleavage of the glycosidic bond in both 5'-methylthioadenosine (MTA) and S-adenosylhomocysteine (SAH/AdoHcy) to adenine and the corresponding thioribose, 5'-methylthioribose and S-ribosylhomocysteine, respectively. Also cleaves 5'-deoxyadenosine, a toxic by-product of radical S-adenosylmethionine (SAM) enzymes, into 5-deoxyribose and adenine. In Staphylococcus carnosus (strain TM300), this protein is 5'-methylthioadenosine/S-adenosylhomocysteine nucleosidase.